Consider the following 198-residue polypeptide: MENVQRLDCPVCGGKGTFVITSHQIDIPYFGPVLETTMICEKCNFRRSDVFPLEVREPKKYILKIESERDLNKRVVRSSSAYIQIPELGVEIKPGPLAEGFVSNVEGVLNRVDNILQTLIRWAETEEQKKKAEELRERIKKLKEGKEEATLILIDPLGHSAIIGEGVEEEILSEEEVEKLKEGIVIMDLDKDKEKEKE.

The C4-type zinc-finger motif lies at 9–43 (CPVCGGKGTFVITSHQIDIPYFGPVLETTMICEKC).

The protein belongs to the ZPR1 family.

This is an uncharacterized protein from Methanocaldococcus jannaschii (strain ATCC 43067 / DSM 2661 / JAL-1 / JCM 10045 / NBRC 100440) (Methanococcus jannaschii).